Reading from the N-terminus, the 220-residue chain is MGNVQERPSETIDRERKRLVETLQADSGLLLDALVARGVLTGPEYEALDALPDAERRVRRLLLLVQSKGEAACQELLRCAQQTVRMPDPAWDWQHVGPGYRNRSYDPSCPGHWTPEAPSSGTTCPELPRASEQEEVGGPEGSEALQPRTPEEPELEAEATEGDEPDLEQEMNPEQEPEPEPEPEPEPEPEPEPEPEPEPEPEPEPEPEPDFQEEDESEDS.

Glycine 2 is lipidated: N-myristoyl glycine. Residues 4–95 (VQERPSETID…MPDPAWDWQH (92 aa)) enclose the CARD domain. An essential for interaction with BAX region spans residues 20–70 (VETLQADSGLLLDALVARGVLTGPEYEALDALPDAERRVRRLLLLVQSKGE). The interval 111-220 (GHWTPEAPSS…FQEEDESEDS (110 aa)) is disordered. Phosphothreonine; by CK2 is present on threonine 149. Residues 152–220 (EPELEAEATE…FQEEDESEDS (69 aa)) show a composition bias toward acidic residues.

Oligomerizes (via CARD doamin). Interacts (via CARD domain) with CASP2; inhibits CASP2 activity in a phosphorylation-dependent manner. Interacts with CASP8; decreases CASP8 activity in a mitochondria localization- and phosphorylation-dependent manner and this interaction is dissociated by calcium. Interacts with TFPT; translocates NOL3 into the nucleus and negatively regulated TFPT-induced cell death. Interacts directly (via CARD domain) with FAS and FADD (via DED domain); inhibits death-inducing signaling complex (DISC) assembly by inhibiting the increase in FAS-FADD binding induced by FAS activation. Interacts (via CARD domain) with BAX (via a C-terminal 33 residues); inhibits BAX activation and translocation and consequently cytochrome c release from mitochondria. Interacts with PPM1G; may dephosphorylate NOL3. Interacts (via CARD domain) with BBC3 (via BH3 domain); preventing the association of BBC3 with BCL2 and resulting in activation of CASP8. Interacts (via CARD domain) with BAD(via BH3 domain); preventing the association of BAD with BCL2. Interacts directly (via CARD domain) with TNFRSF1A; inhibits TNF-signaling pathway. Phosphorylation at Thr-149 is required for its antiapoptotic effect by blocking death-inducing signaling complex death-inducing signaling complex (DISC) activity through the control of interaction with CASP8. Phosphorylation at Thr-149 results in translocation to mitochondria and this translocation enables the binding to CASP8. Dephosphorylated at Thr-149 by calcineurin; doesn't inhibit the association between FADD and CASP8 and the consequent apoptosis. Post-translationally, polyubiquitinated by MDM2; promoting proteasomal-dependent degradation in response to apoptotic stimuli.

It is found in the cytoplasm. The protein localises to the mitochondrion. The protein resides in the sarcoplasmic reticulum. Its subcellular location is the membrane. Apoptosis repressor that blocks multiple modes of cell death. Inhibits extrinsic apoptotic pathways through two different ways. Firstly by interacting with FAS and FADD upon FAS activation blocking death-inducing signaling complex (DISC) assembly. Secondly by interacting with CASP8 in a mitochondria localization- and phosphorylation-dependent manner, limiting the amount of soluble CASP8 available for DISC-mediated activation. Inhibits intrinsic apoptotic pathway in response to a wide range of stresses, through its interaction with BAX resulting in BAX inactivation, preventing mitochondrial dysfunction and release of pro-apoptotic factors. Inhibits calcium-mediated cell death by functioning as a cytosolic calcium buffer, dissociating its interaction with CASP8 and maintaining calcium homeostasis. Negatively regulates oxidative stress-induced apoptosis by phosphorylation-dependent suppression of the mitochondria-mediated intrinsic pathway, by blocking CASP2 activation and BAX translocation. Negatively regulates hypoxia-induced apoptosis in part by inhibiting the release of cytochrome c from mitochondria in a caspase-independent manner. Also inhibits TNF-induced necrosis by preventing TNF-signaling pathway through TNFRSF1A interaction abrogating the recruitment of RIPK1 to complex I. Finally through its role as apoptosis repressor, promotes vascular remodeling through inhibition of apoptosis and stimulation of proliferation, in response to hypoxia. Inhibits too myoblast differentiation through caspase inhibition. The protein is Nucleolar protein 3 (Nol3) of Mus musculus (Mouse).